Reading from the N-terminus, the 621-residue chain is KIF-binding protein (621 aa).

A disordered region spans residues G51–G75. Residues P54 to D65 are compositionally biased toward acidic residues. S178 carries the post-translational modification Phosphoserine.

It belongs to the KIF-binding protein family. Interacts with KIF1B; positively regulates KIF1B microtubule motor activity. Interacts with STMN2. Highly expressed in heart, brain, ovary, testis, spinal cord and all specific brain regions examined. Moderate expressed at intermediate level in all other adult tissues examined, as well as in fetal liver and brain. Not expressed in blood leukocytes.

It is found in the cytoplasm. The protein localises to the cytoskeleton. Activator of KIF1B plus-end-directed microtubule motor activity. Required for organization of axonal microtubules, and axonal outgrowth and maintenance during peripheral and central nervous system development. The chain is KIF-binding protein from Homo sapiens (Human).